Consider the following 309-residue polypeptide: Coproporphyrin III ferrochelatase (309 aa).

Residues tyrosine 12, threonine 14, arginine 29, 45–46 (RY), serine 53, and tyrosine 124 each bind Fe-coproporphyrin III. Residues histidine 182 and glutamate 263 each coordinate Fe(2+).

The protein belongs to the ferrochelatase family. In terms of assembly, monomer.

It is found in the cytoplasm. The catalysed reaction is Fe-coproporphyrin III + 2 H(+) = coproporphyrin III + Fe(2+). It functions in the pathway porphyrin-containing compound metabolism; protoheme biosynthesis. Involved in coproporphyrin-dependent heme b biosynthesis. Catalyzes the insertion of ferrous iron into coproporphyrin III to form Fe-coproporphyrin III. The polypeptide is Coproporphyrin III ferrochelatase (Listeria monocytogenes serovar 1/2a (strain ATCC BAA-679 / EGD-e)).